Here is a 215-residue protein sequence, read N- to C-terminus: NAD(P)H-hydrate epimerase (215 aa).

The region spanning 10–211 (AQRYDAHATN…DIGIYAQDRV (202 aa)) is the YjeF N-terminal domain. 58–62 (NNGGD) serves as a coordination point for (6S)-NADPHX. K(+) contacts are provided by Asn-59 and Asp-121. Residues 125–131 (GVGLTRD) and Asp-154 each bind (6S)-NADPHX. Ser-157 is a binding site for K(+).

Belongs to the NnrE/AIBP family. Requires K(+) as cofactor.

The catalysed reaction is (6R)-NADHX = (6S)-NADHX. It catalyses the reaction (6R)-NADPHX = (6S)-NADPHX. Functionally, catalyzes the epimerization of the S- and R-forms of NAD(P)HX, a damaged form of NAD(P)H that is a result of enzymatic or heat-dependent hydration. This is a prerequisite for the S-specific NAD(P)H-hydrate dehydratase to allow the repair of both epimers of NAD(P)HX. The protein is NAD(P)H-hydrate epimerase of Levilactobacillus brevis (strain ATCC 367 / BCRC 12310 / CIP 105137 / JCM 1170 / LMG 11437 / NCIMB 947 / NCTC 947) (Lactobacillus brevis).